Consider the following 248-residue polypeptide: Granzyme F (248 aa).

Positions 1-18 are cleaved as a signal peptide; sequence MPPILILLTLLLPLRAGA. A propeptide spanning residues 19–20 is cleaved from the precursor; it reads EE. In terms of domain architecture, Peptidase S1 spans 21-246; the sequence is IIGGHEVKPH…YLPWISRNMK (226 aa). Residues C50 and C66 are joined by a disulfide bond. H65 acts as the Charge relay system in catalysis. An N-linked (GlcNAc...) asparagine glycan is attached at N106. Catalysis depends on D109, which acts as the Charge relay system. 2 disulfides stabilise this stretch: C143–C210 and C175–C189. N154 carries an N-linked (GlcNAc...) asparagine glycan. S204 acts as the Charge relay system in catalysis. A glycan (N-linked (GlcNAc...) asparagine) is linked at N223.

Belongs to the peptidase S1 family. Granzyme subfamily.

The protein resides in the cytolytic granule. Functionally, this enzyme is probably necessary for target cell lysis in cell-mediated immune responses. The polypeptide is Granzyme F (Gzmf) (Mus musculus (Mouse)).